The sequence spans 1391 residues: ESX-5 secretion system protein EccC5 (1391 aa).

A run of 2 helical transmembrane segments spans residues 38–58 (WLIV…AMVF) and 65–85 (FGGI…MMMF). FtsK domains lie at 476–678 (GELL…GAAQ), 858–1052 (QPPW…EDAK), and 1161–1354 (LAPV…DPDE). Residues 499–506 (GTTGSGKS), 876–883 (GAGGSGKT), and 1178–1185 (GRRECGRT) contribute to the ATP site.

In terms of assembly, part of the ESX-5 / type VII secretion system (T7SS), which is composed of cytosolic and membrane components. The ESX-5 membrane complex is composed of EccB5, EccC5, EccD5 and EccE5.

It localises to the cell inner membrane. In terms of biological role, part of the ESX-5 specialized secretion system, which is responsible for the secretion of EsxN and a number of PE_PGRS and PPE proteins, including PPE41. In Mycobacterium tuberculosis (strain CDC 1551 / Oshkosh), this protein is ESX-5 secretion system protein EccC5.